Here is a 1939-residue protein sequence, read N- to C-terminus: Myosin-1 (1939 aa).

The region spanning 33–82 (DAKTSVFVAEPKESFVKGTVQSREGGKVTVKTEAGATLTVKEDQVFPMNP) is the Myosin N-terminal SH3-like domain. 2 positions are modified to phosphothreonine: T64 and T69. The Myosin motor domain maps to 86–782 (DKIEDMAMMT…LLGLLEEMRD (697 aa)). An N6,N6,N6-trimethyllysine modification is found at K130. 179–186 (GESGAGKT) serves as a coordination point for ATP. Y389 is modified (phosphotyrosine). A Phosphoserine modification is found at S392. Phosphothreonine is present on T419. A Phosphotyrosine modification is found at Y424. Phosphoserine is present on S625. Positions 659–681 (LNKLMTNLRSTHPHFVRCIIPNE) are actin-binding. H757 is modified (pros-methylhistidine). Residues 761-775 (KFGHTKVFFKAGLLG) form an actin-binding region. Residues 785-814 (LAQLITRTQARCRGFLARVEYQKMVERRES) enclose the IQ domain. Residues 843–1939 (LLKSAETEKE…EVHTKIISEE (1097 aa)) are a coiled coil. 2 positions are modified to phosphoserine: S1092 and S1096. Disordered stretches follow at residues 1125–1147 (EIEA…SREL) and 1153–1172 (RLEE…KKRE). Basic and acidic residues predominate over residues 1128-1147 (AERASRAKAEKQRSDLSREL). A phosphoserine mark is found at S1162 and S1237. Position 1241 is a phosphothreonine (T1241). S1243 bears the Phosphoserine mark. Position 1255 is a phosphothreonine (T1255). Phosphoserine is present on S1261. Phosphothreonine is present on residues T1265 and T1286. Phosphoserine occurs at positions 1288, 1292, 1303, and 1306. Phosphotyrosine is present on Y1464. T1467 carries the post-translational modification Phosphothreonine. S1474 bears the Phosphoserine mark. At Y1492 the chain carries Phosphotyrosine. S1495 carries the post-translational modification Phosphoserine. Phosphothreonine is present on T1501. S1514 carries the post-translational modification Phosphoserine. Position 1517 is a phosphothreonine (T1517). Phosphoserine is present on residues S1554, S1574, S1600, S1603, S1714, and S1726. A phosphothreonine mark is found at T1730 and T1736. S1739 bears the Phosphoserine mark.

This sequence belongs to the TRAFAC class myosin-kinesin ATPase superfamily. Myosin family. In terms of assembly, muscle myosin is a hexameric protein that consists of 2 heavy chain subunits (MHC), 2 alkali light chain subunits (MLC) and 2 regulatory light chain subunits (MLC-2). Interacts with SLC26A5.

The protein localises to the cytoplasm. It localises to the myofibril. Its function is as follows. Required for normal hearing. It plays a role in cochlear amplification of auditory stimuli, likely through the positive regulation of prestin (SLC26A5) activity and outer hair cell (OHC) electromotility. The polypeptide is Myosin-1 (MYH1) (Canis lupus familiaris (Dog)).